The following is a 442-amino-acid chain: tRNA-2-methylthio-N(6)-dimethylallyladenosine synthase (442 aa).

Positions 2–117 (KSLYIKTYGC…LPELIVKASR (116 aa)) constitute an MTTase N-terminal domain. The [4Fe-4S] cluster site is built by C11, C47, C80, C157, C161, and C164. One can recognise a Radical SAM core domain in the interval 143 to 374 (NSQGSSAFLS…QKLINKQQLE (232 aa)). Positions 377–441 (QSMVGKTIPV…QNSLLGRELQ (65 aa)) constitute a TRAM domain.

It belongs to the methylthiotransferase family. MiaB subfamily. As to quaternary structure, monomer. The cofactor is [4Fe-4S] cluster.

Its subcellular location is the cytoplasm. The catalysed reaction is N(6)-dimethylallyladenosine(37) in tRNA + (sulfur carrier)-SH + AH2 + 2 S-adenosyl-L-methionine = 2-methylsulfanyl-N(6)-dimethylallyladenosine(37) in tRNA + (sulfur carrier)-H + 5'-deoxyadenosine + L-methionine + A + S-adenosyl-L-homocysteine + 2 H(+). In terms of biological role, catalyzes the methylthiolation of N6-(dimethylallyl)adenosine (i(6)A), leading to the formation of 2-methylthio-N6-(dimethylallyl)adenosine (ms(2)i(6)A) at position 37 in tRNAs that read codons beginning with uridine. This chain is tRNA-2-methylthio-N(6)-dimethylallyladenosine synthase, found in Wolbachia sp. subsp. Brugia malayi (strain TRS).